Here is a 178-residue protein sequence, read N- to C-terminus: Translation initiation factor IF-3 (178 aa).

The protein belongs to the IF-3 family. In terms of assembly, monomer.

It is found in the cytoplasm. IF-3 binds to the 30S ribosomal subunit and shifts the equilibrium between 70S ribosomes and their 50S and 30S subunits in favor of the free subunits, thus enhancing the availability of 30S subunits on which protein synthesis initiation begins. The chain is Translation initiation factor IF-3 from Ureaplasma parvum serovar 3 (strain ATCC 700970).